The chain runs to 250 residues: Triosephosphate isomerase (250 aa).

8-10 (NWK) serves as a coordination point for substrate. Histidine 93 functions as the Electrophile in the catalytic mechanism. The active-site Proton acceptor is the glutamate 165. Substrate contacts are provided by glycine 171 and serine 211.

This sequence belongs to the triosephosphate isomerase family. As to quaternary structure, homodimer.

The protein resides in the cytoplasm. It carries out the reaction D-glyceraldehyde 3-phosphate = dihydroxyacetone phosphate. It functions in the pathway carbohydrate biosynthesis; gluconeogenesis. The protein operates within carbohydrate degradation; glycolysis; D-glyceraldehyde 3-phosphate from glycerone phosphate: step 1/1. Involved in the gluconeogenesis. Catalyzes stereospecifically the conversion of dihydroxyacetone phosphate (DHAP) to D-glyceraldehyde-3-phosphate (G3P). This Malacoplasma penetrans (strain HF-2) (Mycoplasma penetrans) protein is Triosephosphate isomerase.